The chain runs to 357 residues: Peptide chain release factor 1 (357 aa).

Gln234 bears the N5-methylglutamine mark. Basic and acidic residues predominate over residues Lys284 to Arg307. Residues Lys284 to Gln313 are disordered.

It belongs to the prokaryotic/mitochondrial release factor family. Post-translationally, methylated by PrmC. Methylation increases the termination efficiency of RF1.

It is found in the cytoplasm. In terms of biological role, peptide chain release factor 1 directs the termination of translation in response to the peptide chain termination codons UAG and UAA. The chain is Peptide chain release factor 1 from Borrelia hermsii (strain HS1 / DAH).